Reading from the N-terminus, the 315-residue chain is Homoserine kinase (315 aa).

An ATP-binding site is contributed by 97–107 (PPARGLGSSAT).

The protein belongs to the GHMP kinase family. Homoserine kinase subfamily.

It localises to the cytoplasm. It catalyses the reaction L-homoserine + ATP = O-phospho-L-homoserine + ADP + H(+). It functions in the pathway amino-acid biosynthesis; L-threonine biosynthesis; L-threonine from L-aspartate: step 4/5. In terms of biological role, catalyzes the ATP-dependent phosphorylation of L-homoserine to L-homoserine phosphate. In Prochlorococcus marinus subsp. pastoris (strain CCMP1986 / NIES-2087 / MED4), this protein is Homoserine kinase.